Consider the following 323-residue polypeptide: Thioredoxin reductase (323 aa).

42 to 49 (YRAEADGA) lines the FAD pocket. The cysteines at positions 143 and 146 are disulfide-linked. Residue 286-295 (DVLCNEVKQA) coordinates FAD.

This sequence belongs to the class-II pyridine nucleotide-disulfide oxidoreductase family. As to quaternary structure, homodimer. FAD is required as a cofactor.

It localises to the cytoplasm. The catalysed reaction is [thioredoxin]-dithiol + NADP(+) = [thioredoxin]-disulfide + NADPH + H(+). This chain is Thioredoxin reductase (trxB), found in Aquifex aeolicus (strain VF5).